Consider the following 185-residue polypeptide: Photosystem I assembly protein Ycf4 (185 aa).

Helical transmembrane passes span 20-40 and 57-77; these read GNFFWACILFLGSLGFLAVGA and ILFFPQGVVMSFYGIAGLFIS.

This sequence belongs to the Ycf4 family.

It is found in the plastid. It localises to the chloroplast thylakoid membrane. In terms of biological role, seems to be required for the assembly of the photosystem I complex. The protein is Photosystem I assembly protein Ycf4 of Sorghum bicolor (Sorghum).